The following is a 198-amino-acid chain: Small ribosomal subunit protein uS4z (198 aa).

Phosphoserine is present on Ser68. The region spanning 109 to 180 (RRLQTIVFKS…PGRVKRRNEK (72 aa)) is the S4 RNA-binding domain. The disordered stretch occupies residues 163-198 (TSPFGGGRPGRVKRRNEKSASKKASGGGDADGDDEE).

This sequence belongs to the universal ribosomal protein uS4 family. In terms of assembly, binds to the translation initiation factors TIF3E1.

The polypeptide is Small ribosomal subunit protein uS4z (RPS9B) (Arabidopsis thaliana (Mouse-ear cress)).